Here is a 185-residue protein sequence, read N- to C-terminus: MKMFESADSTATRSGQDLWAEICSCLPNPEQEDGANNAFSDSFVDSCPEGEGQREVADFAVQPAVKPWAPLQDSEVYLASLEKKLRRIKGLNQEVTSKDMLRTLAQAKKECWDRFLQEKLASEFFVDGLDSDESTLEHFKRWLQPDKVAVSTEEVQYLIPPESQVEKPVAEDEPAAGDKPAAAEQ.

Residues 78–98 (LASLEKKLRRIKGLNQEVTSK) adopt a coiled-coil conformation. The interval 159 to 185 (IPPESQVEKPVAEDEPAAGDKPAAAEQ) is disordered.

As to quaternary structure, interacts with AP2S1; the interaction is direct and mediates association with adaptor protein complex 2 (AP-2).

The protein localises to the membrane. Its subcellular location is the coated pit. Its function is as follows. Regulates clathrin-mediated endocytsois of cargos such as transferrin probably through the association and modulation of adaptor protein complex 2 (AP-2). Has a role in ciliogenesis. Required for proper cephalic and left/right axis development. The protein is Coiled-coil domain-containing protein 32 of Homo sapiens (Human).